The following is a 121-amino-acid chain: Putative membrane protein insertion efficiency factor (121 aa).

The segment at 97–121 (VPARRDRHAGGRRCCPANVDEQRST) is disordered.

This sequence belongs to the UPF0161 family.

The protein localises to the cell membrane. Could be involved in insertion of integral membrane proteins into the membrane. The chain is Putative membrane protein insertion efficiency factor from Rhodococcus jostii (strain RHA1).